A 771-amino-acid polypeptide reads, in one-letter code: Transducin-like enhancer protein 3-B (771 aa).

The interval 1 to 141 (MYPQGRHPAP…PLTQQQLQAQ (141 aa)) is q domain. The span at 137 to 148 (QLQAQHLSHAAH) shows a compositional bias: low complexity. Disordered regions lie at residues 137–174 (QLQA…GSGS) and 196–360 (HHDL…MEAL). The interval 142–209 (HLSHAAHGPP…EHRERESSTN (68 aa)) is GP domain. Over residues 196–206 (HHDLEHRERES) the composition is skewed to basic and acidic residues. A compositionally biased stretch (low complexity) spans 207–217 (STNNSVSPSDS). The interval 210 to 278 (NSVSPSDSLR…TPRVSPSHSP (69 aa)) is ccN domain. 2 stretches are compositionally biased toward basic and acidic residues: residues 219–257 (RASE…KSDD) and 282–293 (GLDKARALKKDA). Positions 235-238 (KKRR) match the Nuclear localization signal motif. The interval 279–451 (PENGLDKARA…GGKPAYSFHV (173 aa)) is SP domain. A compositionally biased stretch (low complexity) spans 294–309 (PNSPASVASSGSTPSS). S296 and S299 each carry phosphoserine. The span at 310–319 (KAKDHPHNDK) shows a compositional bias: basic and acidic residues. Polar residues predominate over residues 320–332 (SSTPGLKSNTPTP). WD repeat units follow at residues 483–521 (SHGE…SKSP), 529–568 (NRDN…PRIK), 573–612 (SSAP…LVRQ), 615–654 (GHTD…QLQQ), 656–695 (DFTS…KYQL), 697–736 (LHES…SIFQ), and 738–771 (KESS…EVIY).

It belongs to the WD repeat Groucho/TLE family. As to expression, at gastrulation, expression is absent within the axial mesoderm. After gastrulation is complete, expressed in the presomitic mesoderm, but expression in the tailbud doesn't begin until the six to seven somite stage, after which it becomes abundant. Expression is abundant throughout somitogenesis within the posterior half of the somites, but is absent from older somites. Also expressed in a dynamic manner within the neural plate.

The protein resides in the nucleus. Transcriptional corepressor that binds to a number of transcription factors. Inhibits the transcriptional activation mediated by CTNNB1 and TCF family members in Wnt signaling. The effects of full-length TLE family members may be modulated by association with dominant-negative AES. The polypeptide is Transducin-like enhancer protein 3-B (Danio rerio (Zebrafish)).